The chain runs to 97 residues: Defective intron-associated endonuclease 3 (97 aa).

Its function is as follows. This endonuclease is specific to the nrdB gene splice junction and is involved in intron homing. This chain is Defective intron-associated endonuclease 3 (ITEVIIIR), found in Escherichia coli (Bacteriophage T4).